The sequence spans 367 residues: MHFTIQREALLKPLQLVAGVVERRQTLPVLSNVLLVVEGQQLSLTGTDLEVELVGRVVLEDAAEPGEITVPARKLMDICKSLPNDVLIDIRVEEQKLLVKAGRSRFTLSTLPANDFPTVEEGPGSLNFSIAQSKLRRLIDRTSFAMAQQDVRYYLNGMLLEVNGGTLRSVATDGHRLAMCSLDAQIPSQDRHQVIVPRKGILELARLLTEQDGEVGIVLGQHHIRATTGEFTFTSKLVDGKFPDYERVLPRGGDKLVVGDRQQLREAFSRTAILSNEKYRGIRLQLSNGLLKIQANNPEQEEAEEEVQVEYNGGNLEIGFNVSYLLDVLGVIGTEQVRFILSDSNSSALVHEADNDDSAYVVMPMRL.

The protein belongs to the beta sliding clamp family. As to quaternary structure, forms a ring-shaped head-to-tail homodimer around DNA which binds and tethers DNA polymerases and other proteins to the DNA. The DNA replisome complex has a single clamp-loading complex (3 tau and 1 each of delta, delta', psi and chi subunits) which binds 3 Pol III cores (1 core on the leading strand and 2 on the lagging strand) each with a beta sliding clamp dimer. Additional proteins in the replisome are other copies of gamma, psi and chi, Ssb, DNA helicase and RNA primase.

It localises to the cytoplasm. Its function is as follows. Confers DNA tethering and processivity to DNA polymerases and other proteins. Acts as a clamp, forming a ring around DNA (a reaction catalyzed by the clamp-loading complex) which diffuses in an ATP-independent manner freely and bidirectionally along dsDNA. Initially characterized for its ability to contact the catalytic subunit of DNA polymerase III (Pol III), a complex, multichain enzyme responsible for most of the replicative synthesis in bacteria; Pol III exhibits 3'-5' exonuclease proofreading activity. The beta chain is required for initiation of replication as well as for processivity of DNA replication. The protein is Beta sliding clamp (dnaN) of Pseudomonas aeruginosa (strain ATCC 15692 / DSM 22644 / CIP 104116 / JCM 14847 / LMG 12228 / 1C / PRS 101 / PAO1).